We begin with the raw amino-acid sequence, 128 residues long: L-ectoine synthase (128 aa).

The protein belongs to the ectoine synthase family.

It catalyses the reaction (2S)-4-acetamido-2-aminobutanoate = L-ectoine + H2O. The protein operates within amine and polyamine biosynthesis; ectoine biosynthesis; L-ectoine from L-aspartate 4-semialdehyde: step 3/3. In terms of biological role, catalyzes the circularization of gamma-N-acetyl-alpha,gamma-diaminobutyric acid (ADABA) to ectoine (1,4,5,6-tetrahydro-2-methyl-4-pyrimidine carboxylic acid), which is an excellent osmoprotectant. In Vibrio campbellii (strain ATCC BAA-1116), this protein is L-ectoine synthase.